The primary structure comprises 313 residues: Pantothenate synthetase (313 aa).

43 to 50 (MGALHEGH) contacts ATP. Catalysis depends on H50, which acts as the Proton donor. Q75 is a binding site for (R)-pantoate. Q75 is a binding site for beta-alanine. 161-164 (GEKD) is an ATP binding site. Q167 provides a ligand contact to (R)-pantoate. ATP-binding positions include V190 and 198–201 (LSSR).

It belongs to the pantothenate synthetase family. As to quaternary structure, homodimer.

Its subcellular location is the cytoplasm. It carries out the reaction (R)-pantoate + beta-alanine + ATP = (R)-pantothenate + AMP + diphosphate + H(+). It functions in the pathway cofactor biosynthesis; (R)-pantothenate biosynthesis; (R)-pantothenate from (R)-pantoate and beta-alanine: step 1/1. Its function is as follows. Catalyzes the condensation of pantoate with beta-alanine in an ATP-dependent reaction via a pantoyl-adenylate intermediate. This chain is Pantothenate synthetase, found in Mycobacterium sp. (strain KMS).